Reading from the N-terminus, the 420-residue chain is 3-phosphoshikimate 1-carboxyvinyltransferase (420 aa).

3 residues coordinate 3-phosphoshikimate: K20, S21, and R25. Phosphoenolpyruvate is bound at residue K20. R119 is a phosphoenolpyruvate binding site. 7 residues coordinate 3-phosphoshikimate: S161, S162, Q163, S189, D303, Q326, and K330. Q163 lines the phosphoenolpyruvate pocket. Residue D303 is the Proton acceptor of the active site. 3 residues coordinate phosphoenolpyruvate: R334, R375, and K400.

The protein belongs to the EPSP synthase family. Monomer.

Its subcellular location is the cytoplasm. The catalysed reaction is 3-phosphoshikimate + phosphoenolpyruvate = 5-O-(1-carboxyvinyl)-3-phosphoshikimate + phosphate. Its pathway is metabolic intermediate biosynthesis; chorismate biosynthesis; chorismate from D-erythrose 4-phosphate and phosphoenolpyruvate: step 6/7. Its function is as follows. Catalyzes the transfer of the enolpyruvyl moiety of phosphoenolpyruvate (PEP) to the 5-hydroxyl of shikimate-3-phosphate (S3P) to produce enolpyruvyl shikimate-3-phosphate and inorganic phosphate. This chain is 3-phosphoshikimate 1-carboxyvinyltransferase, found in Dehalococcoides mccartyi (strain ATCC BAA-2100 / JCM 16839 / KCTC 5957 / BAV1).